Reading from the N-terminus, the 348-residue chain is Dihydroorotase (348 aa).

Positions 17 and 19 each coordinate Zn(2+). Substrate-binding positions include 19 to 21 and asparagine 45; that span reads HLR. Zn(2+)-binding residues include lysine 103, histidine 140, and histidine 178. Lysine 103 is subject to N6-carboxylysine. Histidine 140 lines the substrate pocket. Leucine 223 provides a ligand contact to substrate. Aspartate 251 provides a ligand contact to Zn(2+). Residue aspartate 251 is part of the active site. Substrate contacts are provided by histidine 255 and alanine 267.

This sequence belongs to the metallo-dependent hydrolases superfamily. DHOase family. Class II DHOase subfamily. As to quaternary structure, homodimer. Zn(2+) is required as a cofactor.

The catalysed reaction is (S)-dihydroorotate + H2O = N-carbamoyl-L-aspartate + H(+). It participates in pyrimidine metabolism; UMP biosynthesis via de novo pathway; (S)-dihydroorotate from bicarbonate: step 3/3. In terms of biological role, catalyzes the reversible cyclization of carbamoyl aspartate to dihydroorotate. This chain is Dihydroorotase, found in Escherichia coli O6:H1 (strain CFT073 / ATCC 700928 / UPEC).